A 241-amino-acid polypeptide reads, in one-letter code: Ribonuclease PH (241 aa).

Residues Arg89 and 127–129 (GTR) contribute to the phosphate site.

This sequence belongs to the RNase PH family. In terms of assembly, homohexameric ring arranged as a trimer of dimers.

The catalysed reaction is tRNA(n+1) + phosphate = tRNA(n) + a ribonucleoside 5'-diphosphate. In terms of biological role, phosphorolytic 3'-5' exoribonuclease that plays an important role in tRNA 3'-end maturation. Removes nucleotide residues following the 3'-CCA terminus of tRNAs; can also add nucleotides to the ends of RNA molecules by using nucleoside diphosphates as substrates, but this may not be physiologically important. Probably plays a role in initiation of 16S rRNA degradation (leading to ribosome degradation) during starvation. The sequence is that of Ribonuclease PH from Xylella fastidiosa (strain M23).